The primary structure comprises 98 residues: Aspartyl/glutamyl-tRNA(Asn/Gln) amidotransferase subunit C (98 aa).

Positions 76–98 are disordered; that stretch reads QVLSGAPDAEDGRFKVPAILEED.

Belongs to the GatC family. In terms of assembly, heterotrimer of A, B and C subunits.

It catalyses the reaction L-glutamyl-tRNA(Gln) + L-glutamine + ATP + H2O = L-glutaminyl-tRNA(Gln) + L-glutamate + ADP + phosphate + H(+). The enzyme catalyses L-aspartyl-tRNA(Asn) + L-glutamine + ATP + H2O = L-asparaginyl-tRNA(Asn) + L-glutamate + ADP + phosphate + 2 H(+). Functionally, allows the formation of correctly charged Asn-tRNA(Asn) or Gln-tRNA(Gln) through the transamidation of misacylated Asp-tRNA(Asn) or Glu-tRNA(Gln) in organisms which lack either or both of asparaginyl-tRNA or glutaminyl-tRNA synthetases. The reaction takes place in the presence of glutamine and ATP through an activated phospho-Asp-tRNA(Asn) or phospho-Glu-tRNA(Gln). This Renibacterium salmoninarum (strain ATCC 33209 / DSM 20767 / JCM 11484 / NBRC 15589 / NCIMB 2235) protein is Aspartyl/glutamyl-tRNA(Asn/Gln) amidotransferase subunit C.